A 469-amino-acid chain; its full sequence is DNA repair and recombination protein rad22 (469 aa).

A disordered region spans residues 265–296 (PAANNHHSEKAGTQINNKDKGSHNSAKPVQRS). Polar residues predominate over residues 287–296 (HNSAKPVQRS). A phosphoserine mark is found at Ser296 and Ser319. Residues 429 to 469 (LHDSTTSHNKSDLMRTNSDPQSAMRSRENYDATVDKKAKKG) are disordered. A compositionally biased stretch (polar residues) spans 431–452 (DSTTSHNKSDLMRTNSDPQSAM). Basic and acidic residues predominate over residues 453 to 469 (RSRENYDATVDKKAKKG).

It belongs to the RAD52 family. Interacts with rhp51.

It localises to the nucleus. Active in the repair of DNA damage and in mating-type switching. Probably involved in the repair of DNA double-strands breaks. Has a role in promoting S phase completion. In Schizosaccharomyces pombe (strain 972 / ATCC 24843) (Fission yeast), this protein is DNA repair and recombination protein rad22 (rad22).